Here is a 273-residue protein sequence, read N- to C-terminus: 4-hydroxy-tetrahydrodipicolinate reductase (273 aa).

NAD(+)-binding positions include Gly-12 to Met-17 and Glu-38. Residue Arg-39 coordinates NADP(+). NAD(+) contacts are provided by residues Gly-102 to Thr-104 and Ala-126 to Phe-129. His-159 functions as the Proton donor/acceptor in the catalytic mechanism. His-160 contributes to the (S)-2,3,4,5-tetrahydrodipicolinate binding site. Lys-163 (proton donor) is an active-site residue. Gly-169–Thr-170 contacts (S)-2,3,4,5-tetrahydrodipicolinate.

This sequence belongs to the DapB family. In terms of assembly, homotetramer.

Its subcellular location is the cytoplasm. The catalysed reaction is (S)-2,3,4,5-tetrahydrodipicolinate + NAD(+) + H2O = (2S,4S)-4-hydroxy-2,3,4,5-tetrahydrodipicolinate + NADH + H(+). It catalyses the reaction (S)-2,3,4,5-tetrahydrodipicolinate + NADP(+) + H2O = (2S,4S)-4-hydroxy-2,3,4,5-tetrahydrodipicolinate + NADPH + H(+). It participates in amino-acid biosynthesis; L-lysine biosynthesis via DAP pathway; (S)-tetrahydrodipicolinate from L-aspartate: step 4/4. Functionally, catalyzes the conversion of 4-hydroxy-tetrahydrodipicolinate (HTPA) to tetrahydrodipicolinate. The protein is 4-hydroxy-tetrahydrodipicolinate reductase of Escherichia coli O157:H7.